The primary structure comprises 354 residues: Selenide, water dikinase (354 aa).

Residue U21 is part of the active site. U21 is a non-standard amino acid (selenocysteine). ATP is bound by residues K24 and 51 to 53 (TSD). D54 contributes to the Mg(2+) binding site. Residues D71, D94, and 141–143 (GHT) each bind ATP. D94 lines the Mg(2+) pocket. D229 contributes to the Mg(2+) binding site.

It belongs to the selenophosphate synthase 1 family. Class I subfamily. Homodimer. Requires Mg(2+) as cofactor.

It carries out the reaction hydrogenselenide + ATP + H2O = selenophosphate + AMP + phosphate + 2 H(+). Synthesizes selenophosphate from selenide and ATP. The protein is Selenide, water dikinase of Treponema denticola (strain ATCC 35405 / DSM 14222 / CIP 103919 / JCM 8153 / KCTC 15104).